Reading from the N-terminus, the 89-residue chain is Small ribosomal subunit protein uS15 (89 aa).

It belongs to the universal ribosomal protein uS15 family. Part of the 30S ribosomal subunit. Forms a bridge to the 50S subunit in the 70S ribosome, contacting the 23S rRNA.

Its function is as follows. One of the primary rRNA binding proteins, it binds directly to 16S rRNA where it helps nucleate assembly of the platform of the 30S subunit by binding and bridging several RNA helices of the 16S rRNA. Functionally, forms an intersubunit bridge (bridge B4) with the 23S rRNA of the 50S subunit in the ribosome. This Blochmanniella pennsylvanica (strain BPEN) protein is Small ribosomal subunit protein uS15.